Reading from the N-terminus, the 1883-residue chain is Zinc finger protein 106 (1883 aa).

Glycyl lysine isopeptide (Lys-Gly) (interchain with G-Cter in SUMO2) cross-links involve residues I6 and K37. The segment at 20 to 44 (HECRVCGVTEVGLSAYAKHISGQLH) adopts a C2H2-type 1; atypical zinc-finger fold. Positions 39 to 162 (ISGQLHKDNV…NGGGPRGRSG (124 aa)) are disordered. Residues 52–67 (EREDDGKGEEEEEDYF) show a composition bias toward acidic residues. Residues K69 and K76 each participate in a glycyl lysine isopeptide (Lys-Gly) (interchain with G-Cter in SUMO2) cross-link. Composition is skewed to basic and acidic residues over residues 77–86 (QRKEQSRQDE), 96–116 (SDDR…DRES), and 128–138 (PQRDWKWEKDG). Residue K133 forms a Glycyl lysine isopeptide (Lys-Gly) (interchain with G-Cter in SUMO2) linkage. Positions 139 to 148 (FNNTRKNSFP) are enriched in polar residues. Residues K243, K287, and K305 each participate in a glycyl lysine isopeptide (Lys-Gly) (interchain with G-Cter in SUMO2) cross-link. Polar residues predominate over residues 322–338 (QTTKQADTATSKVSGKN). The interval 322-356 (QTTKQADTATSKVSGKNGSAAREKPRRWTPYPSQK) is disordered. Glycyl lysine isopeptide (Lys-Gly) (interchain with G-Cter in SUMO2) cross-links involve residues K356, K365, K371, and K417. The segment at 389–423 (IQEPQTDETRNSPTQKTQKEIHTGSLNHKASSDSA) is disordered. Over residues 412 to 423 (GSLNHKASSDSA) the composition is skewed to polar residues. S422 bears the Phosphoserine mark. Residues K451, K461, K477, K492, K505, K515, K525, K539, and K557 each participate in a glycyl lysine isopeptide (Lys-Gly) (interchain with G-Cter in SUMO2) cross-link. Positions 457–501 (CPATKSLSQKQDPKNISKNTKTNFFSPGEHSNPSNKPTVEDNHGP) are disordered. Positions 461–493 (KSLSQKQDPKNISKNTKTNFFSPGEHSNPSNKP) are enriched in polar residues. Residues 586–637 (LEDESDGETSDTEKHGTKIGTLGSATTELLSGSTRTADEKEEDDRILKTSRE) form a disordered region. S590 is subject to Phosphoserine. K603 is covalently cross-linked (Glycyl lysine isopeptide (Lys-Gly) (interchain with G-Cter in SUMO2)). Polar residues predominate over residues 608–620 (GSATTELLSGSTR). 2 positions are modified to phosphoserine: S641 and S661. Glycyl lysine isopeptide (Lys-Gly) (interchain with G-Cter in SUMO2) cross-links involve residues K671, K684, K705, K721, K741, K775, and K807. Residues S859, S861, S864, and S893 each carry the phosphoserine modification. Positions 879–945 (EEGTGKENEP…HSAQLSSDHI (67 aa)) are disordered. A compositionally biased stretch (polar residues) spans 888-906 (PQQMVSPSNSLRAGQSQKA). Residues K905 and K911 each participate in a glycyl lysine isopeptide (Lys-Gly) (interchain with G-Cter in SUMO2) cross-link. S937 carries the phosphoserine modification. K953 participates in a covalent cross-link: Glycyl lysine isopeptide (Lys-Gly) (interchain with G-Cter in SUMO2). Positions 958–976 (QERSIPPSENQNSQESNGE) are enriched in polar residues. 4 disordered regions span residues 958 to 982 (QERS…CLSS), 997 to 1048 (ATDS…KERS), 1121 to 1140 (EPSE…RRNS), and 1182 to 1218 (PTFQ…VPPS). T1021 carries the phosphothreonine modification. Phosphoserine is present on residues S1025, S1026, and S1031. Over residues 1035–1045 (KNKRRKIKGKK) the composition is skewed to basic residues. S1249 carries the post-translational modification Phosphoserine. The disordered stretch occupies residues 1252–1483 (ESTESFHEPS…EVSSTSEIGT (232 aa)). Positions 1255 to 1277 (ESFHEPSQELKFSVEQRNTRNRE) are enriched in basic and acidic residues. Residue K1265 forms a Glycyl lysine isopeptide (Lys-Gly) (interchain with G-Cter in SUMO2) linkage. 2 stretches are compositionally biased toward polar residues: residues 1278 to 1291 (NSPS…SSIN) and 1299 to 1312 (KGNS…SSFL). Phosphoserine occurs at positions 1279, 1281, and 1284. K1299 participates in a covalent cross-link: Glycyl lysine isopeptide (Lys-Gly) (interchain with G-Cter in SUMO2). Position 1302 is a phosphoserine (S1302). A Glycyl lysine isopeptide (Lys-Gly) (interchain with G-Cter in SUMO2) cross-link involves residue K1324. S1328 is modified (phosphoserine). Polar residues predominate over residues 1333–1346 (PEQQAESTLTSAET). Residues 1349-1362 (SKKKKKLRKKKSLR) show a composition bias toward basic residues. S1370 is subject to Phosphoserine. T1372 is modified (phosphothreonine). Residues K1380, K1392, and K1395 each participate in a glycyl lysine isopeptide (Lys-Gly) (interchain with G-Cter in SUMO2) cross-link. 2 stretches are compositionally biased toward basic and acidic residues: residues 1402–1416 (EDSR…VRDE) and 1444–1456 (GEEK…KKDI). A Glycyl lysine isopeptide (Lys-Gly) (interchain with G-Cter in SUMO2) cross-link involves residue K1454. Residues 1457 to 1481 (WNSTEQNPLETSRSGCDEVSSTSEI) are compositionally biased toward polar residues. S1468 is modified (phosphoserine). Glycyl lysine isopeptide (Lys-Gly) (interchain with G-Cter in SUMO2) cross-links involve residues K1486 and K1504. A compositionally biased stretch (polar residues) spans 1502 to 1513 (SIKGSKNSSEIS). The segment at 1502–1527 (SIKGSKNSSEISSEPGDDDEPTEGSF) is disordered. WD repeat units follow at residues 1529-1568 (GHQA…GVFE), 1570-1611 (HTSK…CVEQ), 1654-1695 (HGPR…LLRT), 1698-1737 (GHSK…RIYK), 1738-1775 (GHNH…RLQV), and 1778-1815 (GHKD…NYRC). Residue K1585 forms a Glycyl lysine isopeptide (Lys-Gly) (interchain with G-Cter in SUMO2) linkage. Residue K1737 forms a Glycyl lysine isopeptide (Lys-Gly) (interchain with G-Cter in SUMO2) linkage. A C2H2-type 2; atypical zinc finger spans residues 1813–1838 (YRCWWHGCSLIFGVVDHLKQHLLTDH). K1864 is covalently cross-linked (Glycyl lysine isopeptide (Lys-Gly) (interchain with G-Cter in SUMO2)).

In terms of assembly, interacts with KNOP1. Interacts with TARDBP and NUP107. Interacts (via N-terminus) with RBM39. Interacts with the SH3 domains of FYN and GRB2. Post-translationally, phosphorylated by FYN in vitro.

It is found in the nucleus. The protein resides in the nucleolus. The protein localises to the nucleus speckle. RNA-binding protein. Specifically binds to 5'-GGGGCC-3' sequence repeats in RNA. Essential for maintenance of peripheral motor neuron and skeletal muscle function. Required for normal expression and/or alternative splicing of a number of genes in spinal cord and skeletal muscle, including the neurite outgrowth inhibitor RTN4. Also contributes to normal mitochondrial respiratory function in motor neurons, via an unknown mechanism. In Homo sapiens (Human), this protein is Zinc finger protein 106 (ZNF106).